A 609-amino-acid chain; its full sequence is Threonine--tRNA ligase (609 aa).

The tract at residues 1 to 145 (MRLLLIHSDY…TIVPGAGAAV (145 aa)) is editing domain. Residues 194–485 (IHVDLMRSKE…TANQSVPQLP (292 aa)) form a catalytic region. Positions 286, 338, and 458 each coordinate Zn(2+).

This sequence belongs to the class-II aminoacyl-tRNA synthetase family. As to quaternary structure, homodimer. Requires Zn(2+) as cofactor.

The protein localises to the cytoplasm. It carries out the reaction tRNA(Thr) + L-threonine + ATP = L-threonyl-tRNA(Thr) + AMP + diphosphate + H(+). Catalyzes the attachment of threonine to tRNA(Thr) in a two-step reaction: L-threonine is first activated by ATP to form Thr-AMP and then transferred to the acceptor end of tRNA(Thr). Also edits incorrectly charged L-seryl-tRNA(Thr). This chain is Threonine--tRNA ligase, found in Methanosphaerula palustris (strain ATCC BAA-1556 / DSM 19958 / E1-9c).